We begin with the raw amino-acid sequence, 505 residues long: Poxin-Schlafen (505 aa).

Residues 1-238 (MAMFYAHAFG…SKEERVDYVL (238 aa)) form a poxin-like region. H17 (proton donor) is an active-site residue. Residue Y138 is the Shared with catalytic histidine of dimeric partner of the active site. K142 serves as the catalytic Proton acceptor; shared with catalytic histidine of dimeric partner. Residues 239 to 505 (MKRLESIRHL…PDEWVSHIKF (267 aa)) form a schlafen-like region.

This sequence in the N-terminal section; belongs to the poxin family. In the C-terminal section; belongs to the Schlafen protein family. Subgroup poxviridae B3 subfamily. In terms of assembly, homodimer.

The catalysed reaction is 2',3'-cGAMP + H2O = Gp(2'-5')Ap(3') + H(+). Functionally, nuclease that is responsible for viral evasion of host cGAS-STING innate immunity. Cleaves 2',3'-cGAMP which is produced by host cGAS following recognition of cytosolic DNA and blocks the subsequent 2',3'-cGAMP-mediated activation of TMEM173/STING, which normally spreads to adjacent cells and activates the interferon and NF-kappa-B immune responses. The chain is Poxin-Schlafen (OPG188) from Bos taurus (Bovine).